Here is a 525-residue protein sequence, read N- to C-terminus: tRNA(Ile)-lysidine synthase (525 aa).

Position 32 to 37 (32 to 37 (SGGRDS)) interacts with ATP.

The protein belongs to the tRNA(Ile)-lysidine synthase family.

The protein localises to the cytoplasm. It catalyses the reaction cytidine(34) in tRNA(Ile2) + L-lysine + ATP = lysidine(34) in tRNA(Ile2) + AMP + diphosphate + H(+). Ligates lysine onto the cytidine present at position 34 of the AUA codon-specific tRNA(Ile) that contains the anticodon CAU, in an ATP-dependent manner. Cytidine is converted to lysidine, thus changing the amino acid specificity of the tRNA from methionine to isoleucine. The protein is tRNA(Ile)-lysidine synthase of Psychrobacter sp. (strain PRwf-1).